Here is a 407-residue protein sequence, read N- to C-terminus: Carbamoyl phosphate synthase small chain (407 aa).

A CPSase region spans residues 1 to 205 (MTETTSKTAP…LADGYGEQDT (205 aa)). L-glutamine-binding residues include Ser-60, Gly-257, and Gly-259. A Glutamine amidotransferase type-1 domain is found at 209-397 (HVVALDFGVK…INLIREKKGE (189 aa)). Catalysis depends on Cys-286, which acts as the Nucleophile. L-glutamine contacts are provided by Leu-287, Gln-290, Asn-328, Gly-330, and Phe-331. Catalysis depends on residues His-370 and Glu-372.

Belongs to the CarA family. As to quaternary structure, composed of two chains; the small (or glutamine) chain promotes the hydrolysis of glutamine to ammonia, which is used by the large (or ammonia) chain to synthesize carbamoyl phosphate. Tetramer of heterodimers (alpha,beta)4.

It catalyses the reaction hydrogencarbonate + L-glutamine + 2 ATP + H2O = carbamoyl phosphate + L-glutamate + 2 ADP + phosphate + 2 H(+). The enzyme catalyses L-glutamine + H2O = L-glutamate + NH4(+). The protein operates within amino-acid biosynthesis; L-arginine biosynthesis; carbamoyl phosphate from bicarbonate: step 1/1. It participates in pyrimidine metabolism; UMP biosynthesis via de novo pathway; (S)-dihydroorotate from bicarbonate: step 1/3. Small subunit of the glutamine-dependent carbamoyl phosphate synthetase (CPSase). CPSase catalyzes the formation of carbamoyl phosphate from the ammonia moiety of glutamine, carbonate, and phosphate donated by ATP, constituting the first step of 2 biosynthetic pathways, one leading to arginine and/or urea and the other to pyrimidine nucleotides. The small subunit (glutamine amidotransferase) binds and cleaves glutamine to supply the large subunit with the substrate ammonia. The sequence is that of Carbamoyl phosphate synthase small chain from Brucella anthropi (strain ATCC 49188 / DSM 6882 / CCUG 24695 / JCM 21032 / LMG 3331 / NBRC 15819 / NCTC 12168 / Alc 37) (Ochrobactrum anthropi).